Reading from the N-terminus, the 258-residue chain is Flagellin B3 (258 aa).

The propeptide occupies 1–8 (MRFLKKRG).

It belongs to the archaeal flagellin family.

The protein resides in the archaeal flagellum. Flagellin is the subunit protein which polymerizes to form the filaments of archaeal flagella. This is Flagellin B3 (flaB3) from Thermococcus kodakarensis (strain ATCC BAA-918 / JCM 12380 / KOD1) (Pyrococcus kodakaraensis (strain KOD1)).